Reading from the N-terminus, the 712-residue chain is BTB/POZ domain-containing protein 18 (712 aa).

The 69-residue stretch at 34–102 (CDVLLQAEGE…LYTSEMEVSQ (69 aa)) folds into the BTB domain. 3 disordered regions span residues 157–176 (VTPS…PCPL), 212–355 (RACP…EGQV), and 374–410 (ETPL…QEMS). A compositionally biased stretch (polar residues) spans 218–228 (QEKNSSPSSHS). Over residues 229–238 (QEPRENKNDT) the composition is skewed to basic and acidic residues. Low complexity predominate over residues 277–288 (SKPSSILSGSSS). The span at 303 to 313 (VNKETPEDKPK) shows a compositional bias: basic and acidic residues. Residues 396–410 (PSGTQPFSSNEQEMS) are compositionally biased toward polar residues. Residues Ser420, Ser671, and Ser672 each carry the phosphoserine modification. 2 disordered regions span residues 653 to 676 (KAGK…EEEE) and 691 to 712 (TTVP…DILT). Positions 702-712 (SESETEVDILT) are enriched in acidic residues.

It is found in the nucleus. Specifically required during spermatogenesis to promote expression of piRNA precursors. The piRNA metabolic process mediates the repression of transposable elements during meiosis by forming complexes composed of piRNAs and Piwi proteins and governs the methylation and subsequent repression of transposons, which is essential for the germline integrity. Acts by facilitating transcription elongation at piRNA loci during pachytene. The chain is BTB/POZ domain-containing protein 18 from Homo sapiens (Human).